We begin with the raw amino-acid sequence, 156 residues long: Small ribosomal subunit protein uS7 (156 aa).

The protein belongs to the universal ribosomal protein uS7 family. As to quaternary structure, part of the 30S ribosomal subunit. Contacts proteins S9 and S11.

Its function is as follows. One of the primary rRNA binding proteins, it binds directly to 16S rRNA where it nucleates assembly of the head domain of the 30S subunit. Is located at the subunit interface close to the decoding center, probably blocks exit of the E-site tRNA. The chain is Small ribosomal subunit protein uS7 from Shewanella denitrificans (strain OS217 / ATCC BAA-1090 / DSM 15013).